The primary structure comprises 562 residues: NAD-dependent malic enzyme (562 aa).

The Proton donor role is filled by Y101. An NAD(+)-binding site is contributed by R154. K172 functions as the Proton acceptor in the catalytic mechanism. Residues E243, D244, and D267 each contribute to the a divalent metal cation site. Residues D267 and N415 each contribute to the NAD(+) site.

Belongs to the malic enzymes family. In terms of assembly, homotetramer. It depends on Mg(2+) as a cofactor. Requires Mn(2+) as cofactor.

The enzyme catalyses (S)-malate + NAD(+) = pyruvate + CO2 + NADH. It carries out the reaction oxaloacetate + H(+) = pyruvate + CO2. The polypeptide is NAD-dependent malic enzyme (Shewanella baltica (strain OS223)).